Reading from the N-terminus, the 370-residue chain is MLKIGRNATILKNNFWFASVRFQSGGFSEKLAKGPSFADFLNMDKPLTADEAFELDRKVELPNGSIHKRLPSWLKTKVPLGTNFNRIKHDLRGSHLHTVCEEAKCPNIGECWGGKDKSRATATIMLMGDTCTRGCRFCSVKTSRRPGPLDPNEPENTAEAIKQWNLGYIVLTSVDRDDLTDLGANHIAKTIQKIKEKAPHILVEALTPDFSGRMDLVEIVAKSGLDVFAHNVETVEELTPFVRDRRATYRQSLSVLKHVKKTCPHLITKTSIMLGLGETDAEILTTLKDLLEHNVDVVTFGQYMRPTKRHLKVQEYVHPKKFEYWKEVAEKLGFLYVASGPLVRSSYKAGEYFMENLIKKRSGNPASMSV.

Positions 100, 105, 111, 131, 135, 138, and 346 each coordinate [4Fe-4S] cluster. A Radical SAM core domain is found at 116–335 (DKSRATATIM…KEVAEKLGFL (220 aa)).

It belongs to the radical SAM superfamily. Lipoyl synthase family. [4Fe-4S] cluster serves as cofactor.

The protein localises to the mitochondrion. The enzyme catalyses [[Fe-S] cluster scaffold protein carrying a second [4Fe-4S](2+) cluster] + N(6)-octanoyl-L-lysyl-[protein] + 2 oxidized [2Fe-2S]-[ferredoxin] + 2 S-adenosyl-L-methionine + 4 H(+) = [[Fe-S] cluster scaffold protein] + N(6)-[(R)-dihydrolipoyl]-L-lysyl-[protein] + 4 Fe(3+) + 2 hydrogen sulfide + 2 5'-deoxyadenosine + 2 L-methionine + 2 reduced [2Fe-2S]-[ferredoxin]. The protein operates within protein modification; protein lipoylation via endogenous pathway; protein N(6)-(lipoyl)lysine from octanoyl-[acyl-carrier-protein]: step 2/2. Catalyzes the radical-mediated insertion of two sulfur atoms into the C-6 and C-8 positions of the octanoyl moiety bound to the lipoyl domains of lipoate-dependent enzymes, thereby converting the octanoylated domains into lipoylated derivatives. This chain is Lipoyl synthase, mitochondrial (lip5), found in Schizosaccharomyces pombe (strain 972 / ATCC 24843) (Fission yeast).